A 168-amino-acid chain; its full sequence is DNA-binding protein inhibitor ID-1 (168 aa).

The bHLH domain maps to 46–98 (LPALLDEQQVNVLLYDMNGCYSRLKELVPTLPQNRKVSKVEILQHVIDYIRDL). Residues 53–106 (QQVNVLLYDMNGCYSRLKELVPTLPQNRKVSKVEILQHVIDYIRDLQLELNSES) are interaction with IFI204. A Nuclear export signal motif is present at residues 91-104 (VIDYIRDLQLELNS).

In terms of assembly, heterodimer with other HLH proteins. Interacts with CLOCK and BMAL1. Interacts with COPS5, IFI204, GATA4 and NKX2-5. In terms of processing, polyubiquitinated; which is favored by Ifi204 and leads to proteasomal degradation.

The protein localises to the cytoplasm. Its subcellular location is the nucleus. Transcriptional regulator (lacking a basic DNA binding domain) which negatively regulates the basic helix-loop-helix (bHLH) transcription factors by forming heterodimers and inhibiting their DNA binding and transcriptional activity. Implicated in regulating a variety of cellular processes, including cellular growth, senescence, differentiation, apoptosis, angiogenesis, and neoplastic transformation. Inhibits skeletal muscle and cardiac myocyte differentiation. Regulates the circadian clock by repressing the transcriptional activator activity of the CLOCK-BMAL1 heterodimer. This is DNA-binding protein inhibitor ID-1 (Id1) from Mus musculus (Mouse).